We begin with the raw amino-acid sequence, 227 residues long: N-acetyltransferase 8B (227 aa).

The Cytoplasmic segment spans residues 1–42 (MAPYHIRKYQESDRKSVVGLLSGGMAEHAPATFRRLLKLPRT). A helical; Signal-anchor for type II membrane protein transmembrane segment spans residues 43–63 (LILLLGGALALLLVSGSWILA). The N-acetyltransferase domain maps to 61-214 (ILALVFSLSL…ARLVDLHTVH (154 aa)). Topologically, residues 64–227 (LVFSLSLLPA…HLPSAQAGRL (164 aa)) are lumenal. K99 is subject to N6-acetyllysine.

Belongs to the NAT8 family. In terms of processing, acetylation on Lys-99 modulates enzymatic activity.

The protein resides in the endoplasmic reticulum-Golgi intermediate compartment membrane. Its subcellular location is the endoplasmic reticulum membrane. It catalyses the reaction L-lysyl-[protein] + acetyl-CoA = N(6)-acetyl-L-lysyl-[protein] + CoA + H(+). With respect to regulation, allosterically regulated by acetylation at residue Lys-99. Endoplasmic reticulum (ER)-membrane-bound lysine N-acetyltransferase catalyzing the N6-acetylation of lysine residues in the lumen of the ER in various proteins, including PROM1 and BACE1, using acetyl-CoA as acetyl donor. Thereby, may regulate apoptosis through the acetylation and the regulation of the expression of PROM1. Acetylates and stabilizes BACE1 immature protein, leading to increased steady-state levels in neurons. By acting on BACE1 expression, may regulate amyloid beta-peptide formation. N(6)-lysine acetylation in ER maintains protein homeostasis and regulates reticulophagy. The chain is N-acetyltransferase 8B from Homo sapiens (Human).